The primary structure comprises 146 residues: Hemoglobin subunit beta (146 aa).

At V1 the chain carries N-acetylvaline. One can recognise a Globin domain in the interval 2–146; it reads HLTPEEKNAV…VANALAHKYH (145 aa). Phosphothreonine is present on T12. S44 bears the Phosphoserine mark. K59 bears the N6-acetyllysine mark. H63 serves as a coordination point for heme b. K82 is modified (N6-acetyllysine). Heme b is bound at residue H92. The residue at position 93 (C93) is an S-nitrosocysteine. Position 144 is an N6-acetyllysine (K144).

The protein belongs to the globin family. Heterotetramer of two alpha chains and two beta chains. In terms of tissue distribution, red blood cells.

Functionally, involved in oxygen transport from the lung to the various peripheral tissues. This is Hemoglobin subunit beta (HBB) from Papio cynocephalus (Yellow baboon).